Reading from the N-terminus, the 505-residue chain is ATP synthase subunit alpha, chloroplastic (505 aa).

170 to 177 is a binding site for ATP; sequence GDRQTGKT.

The protein belongs to the ATPase alpha/beta chains family. In terms of assembly, F-type ATPases have 2 components, CF(1) - the catalytic core - and CF(0) - the membrane proton channel. CF(1) has five subunits: alpha(3), beta(3), gamma(1), delta(1), epsilon(1). CF(0) has four main subunits: a, b, b' and c.

Its subcellular location is the plastid. The protein localises to the chloroplast thylakoid membrane. It carries out the reaction ATP + H2O + 4 H(+)(in) = ADP + phosphate + 5 H(+)(out). Its function is as follows. Produces ATP from ADP in the presence of a proton gradient across the membrane. The alpha chain is a regulatory subunit. This is ATP synthase subunit alpha, chloroplastic from Phaeodactylum tricornutum (strain CCAP 1055/1).